Reading from the N-terminus, the 220-residue chain is Putative vesicle-associated membrane protein 726 (220 aa).

Residues 1–196 (MGQQSLIYSF…LWFENMKIKL (196 aa)) lie on the Cytoplasmic side of the membrane. The Longin domain maps to 10-114 (FVARGTVILA…SLNKEFGSKL (105 aa)). Residues 130-190 (KLSKVKAQVT…TKMKRKLWFE (61 aa)) enclose the v-SNARE coiled-coil homology domain. The helical; Anchor for type IV membrane protein transmembrane segment at 197-217 (IVFGIIVALILIIILSVCHGF) threads the bilayer. Over 218–220 (KCT) the chain is Vesicular.

The protein belongs to the synaptobrevin family. As to expression, expressed in flowers, leaves, stems and roots.

Its subcellular location is the cell membrane. The protein localises to the early endosome membrane. Involved in the targeting and/or fusion of transport vesicles to their target membrane. The sequence is that of Putative vesicle-associated membrane protein 726 (VAMP726) from Arabidopsis thaliana (Mouse-ear cress).